A 76-amino-acid chain; its full sequence is Omega-conotoxin-like TxO3 (76 aa).

Positions 1–22 are cleaved as a signal peptide; that stretch reads MKLTCVVIVAVLFLTAWTFVTA. The propeptide occupies 23 to 52; sequence VPHSSNALENLYLKAHHEMNNPEASELNKR. Intrachain disulfides connect Cys53/Cys67, Cys60/Cys71, and Cys66/Cys75.

It belongs to the conotoxin O1 superfamily. As to expression, expressed by the venom duct.

The protein localises to the secreted. Omega-conotoxins act at presynaptic membranes, they bind and block voltage-gated calcium channels (Cav). In Conus textile (Cloth-of-gold cone), this protein is Omega-conotoxin-like TxO3 (TXO3).